A 280-amino-acid chain; its full sequence is MSEQEVTYSTVRFHESSRLQKLVRTEEPQRPREACYREYSVPWKLIVIACGILCFLLLVTVALLAITIFQHSQQKHELQETLNCHDNCSPTQSDVNLKDELLRNKSIECRPGNDLLESLSRDQNRWYSETKTFSDSSQHTGVHERPISKAEGKGRGFEKYWFCYGIKCYYFNMDRKTWSGCKQTCQISSLSLLKIDNEDELKFLQNLAPSDISWIGLSYDNKKKDWVWIDNGPSKLALNTTKYNIRDGLCMSLSKTRLDNGDCDKSYICICGKRLDKFPH.

The Cytoplasmic portion of the chain corresponds to 1 to 44; it reads MSEQEVTYSTVRFHESSRLQKLVRTEEPQRPREACYREYSVPWK. The chain crosses the membrane as a helical; Signal-anchor for type II membrane protein span at residues 45–66; sequence LIVIACGILCFLLLVTVALLAI. The Extracellular portion of the chain corresponds to 67 to 280; it reads TIFQHSQQKH…CGKRLDKFPH (214 aa). Residue N104 is glycosylated (N-linked (GlcNAc...) asparagine). Positions 156 to 275 constitute a C-type lectin domain; it reads GFEKYWFCYG…SYICICGKRL (120 aa). Cystine bridges form between C163/C168, C181/C269, C185/C271, and C250/C263. N239 carries N-linked (GlcNAc...) asparagine glycosylation.

Homodimer; disulfide-linked.

It is found in the membrane. Receptor on natural killer (NK) cells for class I MHC. The sequence is that of Killer cell lectin-like receptor 7 (Klra7) from Mus musculus (Mouse).